The following is a 176-amino-acid chain: Probable chemoreceptor glutamine deamidase CheD (176 aa).

This sequence belongs to the CheD family.

The enzyme catalyses L-glutaminyl-[protein] + H2O = L-glutamyl-[protein] + NH4(+). Probably deamidates glutamine residues to glutamate on methyl-accepting chemotaxis receptors (MCPs), playing an important role in chemotaxis. In Rhodospirillum rubrum (strain ATCC 11170 / ATH 1.1.1 / DSM 467 / LMG 4362 / NCIMB 8255 / S1), this protein is Probable chemoreceptor glutamine deamidase CheD.